We begin with the raw amino-acid sequence, 24 residues long: Brevinin-1SPc (24 aa).

A disulfide bridge links Cys18 with Cys24.

Expressed by the skin glands.

The protein resides in the secreted. Its function is as follows. Antimicrobial peptide with activity against Gram-negative and Gram-positive bacteria and fungi. Also shows hemolytic activity. The sequence is that of Brevinin-1SPc from Lithobates septentrionalis (Mink frog).